A 417-amino-acid polypeptide reads, in one-letter code: Imidazolonepropionase (417 aa).

His-77 and His-79 together coordinate Fe(3+). His-77 and His-79 together coordinate Zn(2+). Residues Arg-86, Tyr-149, and His-182 each coordinate 4-imidazolone-5-propanoate. Tyr-149 is an N-formimidoyl-L-glutamate binding site. His-247 is a Fe(3+) binding site. Residue His-247 coordinates Zn(2+). 4-imidazolone-5-propanoate is bound at residue Gln-250. Asp-322 lines the Fe(3+) pocket. Asp-322 is a Zn(2+) binding site. 2 residues coordinate N-formimidoyl-L-glutamate: Asn-324 and Gly-326. Residue Thr-327 participates in 4-imidazolone-5-propanoate binding.

It belongs to the metallo-dependent hydrolases superfamily. HutI family. Zn(2+) is required as a cofactor. Requires Fe(3+) as cofactor.

The protein localises to the cytoplasm. The catalysed reaction is 4-imidazolone-5-propanoate + H2O = N-formimidoyl-L-glutamate. It participates in amino-acid degradation; L-histidine degradation into L-glutamate; N-formimidoyl-L-glutamate from L-histidine: step 3/3. Functionally, catalyzes the hydrolytic cleavage of the carbon-nitrogen bond in imidazolone-5-propanoate to yield N-formimidoyl-L-glutamate. It is the third step in the universal histidine degradation pathway. The protein is Imidazolonepropionase of Cupriavidus taiwanensis (strain DSM 17343 / BCRC 17206 / CCUG 44338 / CIP 107171 / LMG 19424 / R1) (Ralstonia taiwanensis (strain LMG 19424)).